The sequence spans 255 residues: Imidazole glycerol phosphate synthase subunit HisF (255 aa).

Catalysis depends on residues D11 and D130.

Belongs to the HisA/HisF family. As to quaternary structure, heterodimer of HisH and HisF.

It localises to the cytoplasm. It catalyses the reaction 5-[(5-phospho-1-deoxy-D-ribulos-1-ylimino)methylamino]-1-(5-phospho-beta-D-ribosyl)imidazole-4-carboxamide + L-glutamine = D-erythro-1-(imidazol-4-yl)glycerol 3-phosphate + 5-amino-1-(5-phospho-beta-D-ribosyl)imidazole-4-carboxamide + L-glutamate + H(+). The protein operates within amino-acid biosynthesis; L-histidine biosynthesis; L-histidine from 5-phospho-alpha-D-ribose 1-diphosphate: step 5/9. In terms of biological role, IGPS catalyzes the conversion of PRFAR and glutamine to IGP, AICAR and glutamate. The HisF subunit catalyzes the cyclization activity that produces IGP and AICAR from PRFAR using the ammonia provided by the HisH subunit. This chain is Imidazole glycerol phosphate synthase subunit HisF, found in Synechococcus sp. (strain ATCC 27144 / PCC 6301 / SAUG 1402/1) (Anacystis nidulans).